A 384-amino-acid chain; its full sequence is Acetylornithine aminotransferase (384 aa).

Pyridoxal 5'-phosphate contacts are provided by residues 94 to 95 (GT) and Phe-121. Arg-124 is a N(2)-acetyl-L-ornithine binding site. 206–209 (DEVQ) is a pyridoxal 5'-phosphate binding site. An N6-(pyridoxal phosphate)lysine modification is found at Lys-235. Ser-263 is a N(2)-acetyl-L-ornithine binding site. Thr-264 contributes to the pyridoxal 5'-phosphate binding site.

This sequence belongs to the class-III pyridoxal-phosphate-dependent aminotransferase family. ArgD subfamily. As to quaternary structure, homodimer. Pyridoxal 5'-phosphate is required as a cofactor.

It localises to the cytoplasm. It carries out the reaction N(2)-acetyl-L-ornithine + 2-oxoglutarate = N-acetyl-L-glutamate 5-semialdehyde + L-glutamate. Its pathway is amino-acid biosynthesis; L-arginine biosynthesis; N(2)-acetyl-L-ornithine from L-glutamate: step 4/4. The chain is Acetylornithine aminotransferase from Listeria innocua serovar 6a (strain ATCC BAA-680 / CLIP 11262).